Consider the following 377-residue polypeptide: Chaperone protein DnaJ (377 aa).

Positions 5–70 (DYYEVLGVSR…DKKAAYDQFG (66 aa)) constitute a J domain. A CR-type zinc finger spans residues 133–211 (GLTKELRIPT…CHGDGRVEKS (79 aa)). 8 residues coordinate Zn(2+): C146, C149, C163, C166, C185, C188, C199, and C202. CXXCXGXG motif repeat units lie at residues 146–153 (CDLCEGSG), 163–170 (CGTCHGQG), 185–192 (CPTCHGRG), and 199–206 (CTKCHGDG).

This sequence belongs to the DnaJ family. Homodimer. Zn(2+) serves as cofactor.

It is found in the cytoplasm. Functionally, participates actively in the response to hyperosmotic and heat shock by preventing the aggregation of stress-denatured proteins and by disaggregating proteins, also in an autonomous, DnaK-independent fashion. Unfolded proteins bind initially to DnaJ; upon interaction with the DnaJ-bound protein, DnaK hydrolyzes its bound ATP, resulting in the formation of a stable complex. GrpE releases ADP from DnaK; ATP binding to DnaK triggers the release of the substrate protein, thus completing the reaction cycle. Several rounds of ATP-dependent interactions between DnaJ, DnaK and GrpE are required for fully efficient folding. Also involved, together with DnaK and GrpE, in the DNA replication of plasmids through activation of initiation proteins. The protein is Chaperone protein DnaJ of Shewanella baltica (strain OS223).